A 588-amino-acid chain; its full sequence is A-type ATP synthase subunit A 3 (588 aa).

Gly-234–Thr-241 serves as a coordination point for ATP.

The protein belongs to the ATPase alpha/beta chains family. In terms of assembly, has multiple subunits with at least A(3), B(3), C, D, E, F, H, I and proteolipid K(x).

It localises to the cell membrane. The catalysed reaction is ATP + H2O + 4 H(+)(in) = ADP + phosphate + 5 H(+)(out). Functionally, component of the A-type ATP synthase that produces ATP from ADP in the presence of a proton gradient across the membrane. The A chain is the catalytic subunit. This Methanospirillum hungatei JF-1 (strain ATCC 27890 / DSM 864 / NBRC 100397 / JF-1) protein is A-type ATP synthase subunit A 3.